Reading from the N-terminus, the 241-residue chain is Small ribosomal subunit protein uS2c (241 aa).

It belongs to the universal ribosomal protein uS2 family.

It localises to the plastid. It is found in the chloroplast. The chain is Small ribosomal subunit protein uS2c (rps2) from Porphyra purpurea (Red seaweed).